Consider the following 128-residue polypeptide: Large ribosomal subunit protein bL12 (128 aa).

This sequence belongs to the bacterial ribosomal protein bL12 family. As to quaternary structure, homodimer. Part of the ribosomal stalk of the 50S ribosomal subunit. Forms a multimeric L10(L12)X complex, where L10 forms an elongated spine to which 2 to 4 L12 dimers bind in a sequential fashion. Binds GTP-bound translation factors.

In terms of biological role, forms part of the ribosomal stalk which helps the ribosome interact with GTP-bound translation factors. Is thus essential for accurate translation. This is Large ribosomal subunit protein bL12 from Methylobacillus flagellatus (strain ATCC 51484 / DSM 6875 / VKM B-1610 / KT).